Reading from the N-terminus, the 295-residue chain is Protein FAM221A (295 aa).

The segment covering 272–283 has biased composition (basic and acidic residues); the sequence is QERLLKEKEQKR. The disordered stretch occupies residues 272–295; the sequence is QERLLKEKEQKRQKNSKPPTTNRP.

The protein belongs to the FAM221 family.

This Xenopus tropicalis (Western clawed frog) protein is Protein FAM221A (fam221a).